The following is a 244-amino-acid chain: Ubiquinone/menaquinone biosynthesis C-methyltransferase UbiE (244 aa).

Residues T70, D91, and D117–A118 contribute to the S-adenosyl-L-methionine site.

The protein belongs to the class I-like SAM-binding methyltransferase superfamily. MenG/UbiE family.

The enzyme catalyses a 2-demethylmenaquinol + S-adenosyl-L-methionine = a menaquinol + S-adenosyl-L-homocysteine + H(+). The catalysed reaction is a 2-methoxy-6-(all-trans-polyprenyl)benzene-1,4-diol + S-adenosyl-L-methionine = a 5-methoxy-2-methyl-3-(all-trans-polyprenyl)benzene-1,4-diol + S-adenosyl-L-homocysteine + H(+). It functions in the pathway quinol/quinone metabolism; menaquinone biosynthesis; menaquinol from 1,4-dihydroxy-2-naphthoate: step 2/2. The protein operates within cofactor biosynthesis; ubiquinone biosynthesis. Functionally, methyltransferase required for the conversion of demethylmenaquinol (DMKH2) to menaquinol (MKH2) and the conversion of 2-polyprenyl-6-methoxy-1,4-benzoquinol (DDMQH2) to 2-polyprenyl-3-methyl-6-methoxy-1,4-benzoquinol (DMQH2). The chain is Ubiquinone/menaquinone biosynthesis C-methyltransferase UbiE from Nitrosospira multiformis (strain ATCC 25196 / NCIMB 11849 / C 71).